The sequence spans 59 residues: Small, acid-soluble spore protein H 2 (59 aa).

It belongs to the SspH family.

It is found in the spore core. The protein is Small, acid-soluble spore protein H 2 of Bacillus cytotoxicus (strain DSM 22905 / CIP 110041 / 391-98 / NVH 391-98).